The following is a 262-amino-acid chain: MAPALLLVPAALASFILAFGTGVEFVRFTSLRPLLGGIPESGGPDARQGWLAALQDRSILAPLAWDLGLLLLFVGQHSLMAAERVKAWTSRYFGVLQRSLYVACTALALQLVMRYWEPIPKGPVLWEARAEPWATWVPLLCFVLHVISWLLIFSILLVFDYAELMGLKQVYYHVLGLGEPLALKSPRALRLFSHLRHPVCVELLTVLWVVPTLGTDRLLLAFLLTLYLGLAHGLDQQDLRYLRAQLQRKLHLLSRPQDGEAE.

Residues 1–4 lie on the Nuclear side of the membrane; that stretch reads MAPA. A helical membrane pass occupies residues 5–28; sequence LLLVPAALASFILAFGTGVEFVRF. The Perinuclear space segment spans residues 29–58; it reads TSLRPLLGGIPESGGPDARQGWLAALQDRS. Residues 59–80 traverse the membrane as a helical segment; it reads ILAPLAWDLGLLLLFVGQHSLM. Residues 81 to 97 lie on the Nuclear side of the membrane; that stretch reads AAERVKAWTSRYFGVLQ. Residues 98–114 form a helical membrane-spanning segment; it reads RSLYVACTALALQLVMR. The Perinuclear space segment spans residues 115–133; that stretch reads YWEPIPKGPVLWEARAEPW. A helical membrane pass occupies residues 134-164; that stretch reads ATWVPLLCFVLHVISWLLIFSILLVFDYAEL. The Nuclear portion of the chain corresponds to 165–191; that stretch reads MGLKQVYYHVLGLGEPLALKSPRALRL. The helical transmembrane segment at 192 to 210 threads the bilayer; that stretch reads FSHLRHPVCVELLTVLWVV. Over 211 to 216 the chain is Perinuclear space; that stretch reads PTLGTD. A helical transmembrane segment spans residues 217-234; that stretch reads RLLLAFLLTLYLGLAHGL. At 235 to 262 the chain is on the nuclear side; it reads DQQDLRYLRAQLQRKLHLLSRPQDGEAE.

It belongs to the nurim family.

Its subcellular location is the nucleus inner membrane. This is Nurim (NRM) from Pan troglodytes (Chimpanzee).